A 613-amino-acid chain; its full sequence is RNA polymerase sigma factor RpoD (613 aa).

Residues 2 to 80 (EQNPQSQLKL…TADEDAAEAA (79 aa)) are sigma-70 factor domain-1. A disordered region spans residues 176–213 (PTATHVGSELSQEDLDDDEDEDEEDGDDDSADDDNSID). The span at 186–212 (SQEDLDDDEDEDEEDGDDDSADDDNSI) shows a compositional bias: acidic residues. The interval 379 to 449 (MVEANLRLVI…TRSIADQART (71 aa)) is sigma-70 factor domain-2. An Interaction with polymerase core subunit RpoC motif is present at residues 403–406 (DLIQ). Positions 458–534 (ETINKLNRIS…DTTLELPLDS (77 aa)) are sigma-70 factor domain-3. A sigma-70 factor domain-4 region spans residues 547-600 (VLAGLTAREAKVLRMRFGIDMNTDYTLEEVGKQFDVTRERIRQIEAKALRKLRH). The H-T-H motif DNA-binding region spans 573–592 (LEEVGKQFDVTRERIRQIEA). Positions 584–599 (RERIRQIEAKALRKLR) are interaction with anti-sigma factors.

The protein belongs to the sigma-70 factor family. RpoD/SigA subfamily. In terms of assembly, interacts transiently with the RNA polymerase catalytic core formed by RpoA, RpoB, RpoC and RpoZ (2 alpha, 1 beta, 1 beta' and 1 omega subunit) to form the RNA polymerase holoenzyme that can initiate transcription. Identified in a complex containing RpoD, the RNA polymerase subunits RpoA, RpoB and RpoZ, CRP and DNA. Interacts with Rsd; this prevents interaction with the RNA polymerase catalytic core and with promoter DNA, and as a consequence, promotes transcription from promoters that require alternative sigma factors. Interacts with phage T4 AsiA; this interferes with binding to DNA and to the RNA polymerase. As to quaternary structure, (Microbial infection) Interacts with Escherichia phage lambda antitermination protein Q.

It localises to the cytoplasm. In terms of biological role, sigma factors are initiation factors that promote the attachment of RNA polymerase to specific initiation sites and are then released. This sigma factor is the primary sigma factor during exponential growth. Preferentially transcribes genes associated with fast growth, such as ribosomal operons, other protein-synthesis related genes, rRNA- and tRNA-encoding genes and prfB. This Escherichia coli (strain K12) protein is RNA polymerase sigma factor RpoD.